We begin with the raw amino-acid sequence, 224 residues long: Metalloproteinase inhibitor 4 (224 aa).

Residues 1 to 29 (MPWSPLAALSWALVLRLLALLWPPGRGEA) form the signal peptide. A Zn(2+)-binding site is contributed by cysteine 30. Involved in metalloproteinase-binding regions lie at residues 30–33 (CSCA) and 99–100 (SS). Intrachain disulfides connect cysteine 30–cysteine 102, cysteine 32–cysteine 131, cysteine 42–cysteine 156, cysteine 158–cysteine 205, cysteine 163–cysteine 168, and cysteine 176–cysteine 197. The NTR domain occupies 30–156 (CSCAPAHPQQ…SLNHHYHQNC (127 aa)).

The protein belongs to the protease inhibitor I35 (TIMP) family. In terms of tissue distribution, expressed in retina, smooth muscle, skin, pancreas, skeletal muscle, heart, brain, lung, kidney and testis. Not found in cartilage, spleen and liver.

The protein localises to the secreted. Complexes with metalloproteinases (such as collagenases) and irreversibly inactivates them by binding to their catalytic zinc cofactor. In Rattus norvegicus (Rat), this protein is Metalloproteinase inhibitor 4 (Timp4).